The primary structure comprises 475 residues: E3 ubiquitin-protein ligase TRIM21 (475 aa).

Residues 16 to 55 (CPICLDPFVEPVSIECGHSFCQECISQVGKGGGSVCPVCR) form an RING-type zinc finger. Positions 92, 95, 114, and 120 each coordinate Zn(2+). The B box-type zinc finger occupies 92-123 (CAVHGERLHLFCEKDGKALCWVCAQSRKHRDH). Residues 128–238 (LEEAAQEYQE…ISELDRRCHS (111 aa)) adopt a coiled-coil conformation. Ser266 is modified (phosphoserine). Residues 268–465 (ELRSVCHVPG…NTAPLTLCPL (198 aa)) enclose the B30.2/SPRY domain.

It belongs to the TRIM/RBCC family. Homotrimer. Interacts (via C-terminus) with IRF8 (via C-terminus). Component of a SCF(SKP2)-like complex containing CUL1, SKP1, TRIM21 and SKP2. Interacts with CALR, CUL1, FBXW11, HSPA5, IKBKB, IRF3, SKP1 and VCP. Interacts with SKP2; the interaction with SKP2 does not depend on an intact F-box domain. Interacts (via N-terminus and C-terminus) with DCP2 (via N-terminus and C-terminus). Interacts with ULK1, BECN1 and with ATG8 family members, including GABARAP, GABARAPL1, GABARAPL2 and MAP1LC3C/LC3C. Interacts with TRIM21 and SQSTM1/sequestosome 1. Interacts with IRF3. Interacts (via the SPRY domain) with NMI (via coiled-coil domain); the interaction promotes 'Lys-63'-linked ubiquitination of NMI. Interacts with IFI35 and NMI; the interaction facilitates NMI-IFI35 complex formation. As to quaternary structure, (Microbial infection) Interacts (via B30.2/SPRY domain) with severe fever with thrombocytopenia syndrome virus (SFTSV) NSs; this interaction activates NFE2L2-mediated transcriptional activation of antioxidant genes. Post-translationally, autoubiquitinated; does not lead to its proteasomal degradation. Deubiquitinated by USP4; leading to its stabilization. As to expression, isoform 1 and isoform 2 are expressed in fetal and adult heart and fetal lung.

It localises to the cytoplasm. Its subcellular location is the cytoplasmic vesicle. The protein resides in the autophagosome. The protein localises to the nucleus. It is found in the P-body. It localises to the stress granule. The enzyme catalyses S-ubiquitinyl-[E2 ubiquitin-conjugating enzyme]-L-cysteine + [acceptor protein]-L-lysine = [E2 ubiquitin-conjugating enzyme]-L-cysteine + N(6)-ubiquitinyl-[acceptor protein]-L-lysine.. Its pathway is protein modification; protein ubiquitination. In terms of biological role, E3 ubiquitin-protein ligase whose activity is dependent on E2 enzymes, UBE2D1, UBE2D2, UBE2E1 and UBE2E2. Forms a ubiquitin ligase complex in cooperation with the E2 UBE2D2 that is used not only for the ubiquitination of USP4 and IKBKB but also for its self-ubiquitination. Component of cullin-RING-based SCF (SKP1-CUL1-F-box protein) E3 ubiquitin-protein ligase complexes such as SCF(SKP2)-like complexes. A TRIM21-containing SCF(SKP2)-like complex is shown to mediate ubiquitination of CDKN1B ('Thr-187' phosphorylated-form), thereby promoting its degradation by the proteasome. Monoubiquitinates IKBKB that will negatively regulates Tax-induced NF-kappa-B signaling. Negatively regulates IFN-beta production post-pathogen recognition by catalyzing polyubiquitin-mediated degradation of IRF3. Mediates the ubiquitin-mediated proteasomal degradation of IgG1 heavy chain, which is linked to the VCP-mediated ER-associated degradation (ERAD) pathway. Promotes IRF8 ubiquitination, which enhanced the ability of IRF8 to stimulate cytokine genes transcription in macrophages. Plays a role in the regulation of the cell cycle progression. Enhances the decapping activity of DCP2. Exists as a ribonucleoprotein particle present in all mammalian cells studied and composed of a single polypeptide and one of four small RNA molecules. At least two isoforms are present in nucleated and red blood cells, and tissue specific differences in RO/SSA proteins have been identified. The common feature of these proteins is their ability to bind HY RNAs.2. Involved in the regulation of innate immunity and the inflammatory response in response to IFNG/IFN-gamma. Organizes autophagic machinery by serving as a platform for the assembly of ULK1, Beclin 1/BECN1 and ATG8 family members and recognizes specific autophagy targets, thus coordinating target recognition with assembly of the autophagic apparatus and initiation of autophagy. Also regulates autophagy through FIP200/RB1CC1 ubiquitination and subsequent decreased protein stability. Represses the innate antiviral response by facilitating the formation of the NMI-IFI35 complex through 'Lys-63'-linked ubiquitination of NMI. During viral infection, promotes cell pyroptosis by mediating 'Lys-6'-linked ubiquitination of ISG12a/IFI27, facilitating its translocation into the mitochondria and subsequent CASP3 activation. When up-regulated through the IFN/JAK/STAT signaling pathway, promotes 'Lys-27'-linked ubiquitination of MAVS, leading to the recruitment of TBK1 and up-regulation of innate immunity. Mediates 'Lys-63'-linked polyubiquitination of G3BP1 in response to heat shock, leading to stress granule disassembly. The chain is E3 ubiquitin-protein ligase TRIM21 from Homo sapiens (Human).